Consider the following 290-residue polypeptide: Arylamine N-acetyltransferase 1 (290 aa).

The residue at position 1 (M1) is an N-acetylmethionine. C68 acts as the Acyl-thioester intermediate in catalysis. S103 contributes to the CoA binding site. 106–107 (VH) lines the substrate pocket. Active-site residues include H107 and D122. Residue Y208 coordinates CoA.

Belongs to the arylamine N-acetyltransferase family.

The protein resides in the cytoplasm. The enzyme catalyses an arylamine + acetyl-CoA = an N-acetylarylamine + CoA. Functionally, participates in the detoxification of a plethora of hydrazine and arylamine drugs. Isoniazid, 2-aminofluorene and anisidine are preferred substrates for NAT-1. No activity with p-aminobenzoic acid (PABA) nor SMZ. The sequence is that of Arylamine N-acetyltransferase 1 (Nat1) from Mus musculus (Mouse).